Here is a 507-residue protein sequence, read N- to C-terminus: Acetylcholine receptor subunit beta-type lev-1 (507 aa).

An N-terminal signal peptide occupies residues 1 to 31 (MMLGGGGGCGAGGTWLGFLVFLAVSLRNHST). Residues N28, N58, and N109 are each glycosylated (N-linked (GlcNAc...) asparagine). Topologically, residues 32 to 138 (CEDIDAEDRL…NNADGNYEVS (107 aa)) are extracellular. Residues 139-159 (FMCNVLILSTGTVLWVPPAIY) form a helical membrane-spanning segment. An intrachain disulfide couples C163 to C177. The next 3 helical transmembrane spans lie at 243 to 263 (VVLI…FYLP), 271 to 291 (GLTM…SKIL), and 305 to 325 (LLLT…ICNI). Positions 373 to 392 (GPSVEENPMRSGEHHPLCRH) are disordered. Basic and acidic residues predominate over residues 379–392 (NPMRSGEHHPLCRH). Residues 454–474 (FLLYGFFGATVGGTIGIIFTA) form a helical membrane-spanning segment.

Belongs to the ligand-gated ion channel (TC 1.A.9) family. Acetylcholine receptor (TC 1.A.9.1) subfamily. Interacts with unc-29. Component of nicotinic acetylcholine receptor composed of 2 non-alpha subunits lev-1 and unc-29, and 3 alpha subunits unc-38, unc-63 and lev-8.

The protein resides in the postsynaptic cell membrane. Its subcellular location is the cell membrane. Functionally, non-alpha subunit of nicotinic acetylcholine receptor (nAChR). Involved in nAChR sensitivity to nicotine. This is Acetylcholine receptor subunit beta-type lev-1 (lev-1) from Caenorhabditis elegans.